Consider the following 103-residue polypeptide: Large ribosomal subunit protein bL21 (103 aa).

This sequence belongs to the bacterial ribosomal protein bL21 family. As to quaternary structure, part of the 50S ribosomal subunit. Contacts protein L20.

This protein binds to 23S rRNA in the presence of protein L20. This is Large ribosomal subunit protein bL21 from Lactobacillus helveticus (strain DPC 4571).